We begin with the raw amino-acid sequence, 329 residues long: Dolichyl-diphosphooligosaccharide--protein glycosyltransferase subunit MAGT1 (329 aa).

Residues 1-23 (MAGLKGLLFGGILFAMCGGLSEG) form the signal peptide. At 24–178 (QKKKEMVLSD…DVNIRVIRPP (155 aa)) the chain is on the extracellular side. In terms of domain architecture, Thioredoxin spans 41-169 (WASKRPVIRM…LARWVADRTD (129 aa)). Asn-65 is a glycosylation site (N-linked (GlcNAc...) asparagine). A disulfide bridge links Cys-81 with Cys-84. A helical membrane pass occupies residues 179–199 (NYAGPLMLGLLLAVIGGLVYL). Topologically, residues 200 to 212 (RRSNLDFLNNKTG) are cytoplasmic. The chain crosses the membrane as a helical span at residues 213–233 (WALAALCFVLAMTSGQMWNHI). Residues 234–258 (RGPPYAHKNPHTNQVNYIHGSSQAQ) are Extracellular-facing. Residues 259–279 (FVAETHIVLLFNGAVTLGMVL) form a helical membrane-spanning segment. The Cytoplasmic portion of the chain corresponds to 280–294 (LHEAATSDLDVGKRK). The chain crosses the membrane as a helical span at residues 295-315 (IMCIAGITLVVIFFSWLLSVF). The Extracellular segment spans residues 316–329 (RSKYHGYPYSFLMT).

It belongs to the OST3/OST6 family. As to quaternary structure, accessory component of the STT3B-containing form of the oligosaccharyltransferase (OST) complex.

The protein localises to the cell membrane. Its subcellular location is the endoplasmic reticulum. It is found in the endoplasmic reticulum membrane. Its pathway is protein modification; protein glycosylation. Accessory component of the STT3B-containing form of the N-oligosaccharyl transferase (OST) complex which catalyzes the transfer of a high mannose oligosaccharide from a lipid-linked oligosaccharide donor to an asparagine residue within an Asn-X-Ser/Thr consensus motif in nascent polypeptide chains. May be involved in substrate-specific N-glycosylation involving acceptor sites that are near cysteine residues. Could indirectly play a role in Mg(2+) transport in epithelial cells. The sequence is that of Dolichyl-diphosphooligosaccharide--protein glycosyltransferase subunit MAGT1 from Xenopus laevis (African clawed frog).